The primary structure comprises 182 residues: Glutamyl-tRNA(Gln) amidotransferase subunit F, mitochondrial (182 aa).

The protein belongs to the GatF family. As to quaternary structure, subunit of the heterotrimeric GatFAB amidotransferase (AdT) complex, composed of A, B and F subunits.

Its subcellular location is the mitochondrion inner membrane. It catalyses the reaction L-glutamyl-tRNA(Gln) + L-glutamine + ATP + H2O = L-glutaminyl-tRNA(Gln) + L-glutamate + ADP + phosphate + H(+). In terms of biological role, allows the formation of correctly charged Gln-tRNA(Gln) through the transamidation of misacylated Glu-tRNA(Gln) in the mitochondria. The reaction takes place in the presence of glutamine and ATP through an activated gamma-phospho-Glu-tRNA(Gln). Required for proper protein synthesis within the mitochondrion. The polypeptide is Glutamyl-tRNA(Gln) amidotransferase subunit F, mitochondrial (Candida tropicalis (strain ATCC MYA-3404 / T1) (Yeast)).